Here is a 307-residue protein sequence, read N- to C-terminus: Aspartate carbamoyltransferase catalytic subunit (307 aa).

Residues arginine 51 and threonine 52 each contribute to the carbamoyl phosphate site. Position 80 (lysine 80) interacts with L-aspartate. Arginine 101, histidine 129, and glutamine 132 together coordinate carbamoyl phosphate. Arginine 162 and arginine 225 together coordinate L-aspartate. Residues leucine 264 and proline 265 each coordinate carbamoyl phosphate.

Belongs to the aspartate/ornithine carbamoyltransferase superfamily. ATCase family. In terms of assembly, heterododecamer (2C3:3R2) of six catalytic PyrB chains organized as two trimers (C3), and six regulatory PyrI chains organized as three dimers (R2).

The enzyme catalyses carbamoyl phosphate + L-aspartate = N-carbamoyl-L-aspartate + phosphate + H(+). It participates in pyrimidine metabolism; UMP biosynthesis via de novo pathway; (S)-dihydroorotate from bicarbonate: step 2/3. Catalyzes the condensation of carbamoyl phosphate and aspartate to form carbamoyl aspartate and inorganic phosphate, the committed step in the de novo pyrimidine nucleotide biosynthesis pathway. In Lachnoclostridium phytofermentans (strain ATCC 700394 / DSM 18823 / ISDg) (Clostridium phytofermentans), this protein is Aspartate carbamoyltransferase catalytic subunit.